The chain runs to 267 residues: Palmitoyltransferase ZDHHC12 (267 aa).

Topologically, residues Met-1–Ser-9 are cytoplasmic. Residues Gly-10–Leu-30 form a helical membrane-spanning segment. Residues His-31–Glu-43 are Lumenal-facing. Residues Leu-44 to Val-64 traverse the membrane as a helical segment. The Cytoplasmic segment spans residues Ser-65–Pro-140. Positions Arg-97–Ala-147 constitute a DHHC domain. Cys-127 serves as the catalytic S-palmitoyl cysteine intermediate. The helical transmembrane segment at Leu-141–Trp-161 threads the bilayer. Residues Ser-162–Gly-178 are Lumenal-facing. A helical transmembrane segment spans residues Leu-179–Ala-199. Topologically, residues Ser-200–Val-267 are cytoplasmic.

Belongs to the DHHC palmitoyltransferase family.

The protein resides in the golgi apparatus membrane. It localises to the endoplasmic reticulum membrane. The enzyme catalyses L-cysteinyl-[protein] + hexadecanoyl-CoA = S-hexadecanoyl-L-cysteinyl-[protein] + CoA. In terms of biological role, palmitoyltransferase that catalyzes the addition of palmitate onto various protein substrates. Has a palmitoyltransferase activity toward gephyrin/GPHN, regulating its clustering at synapses and its function in gamma-aminobutyric acid receptor clustering. Thereby, indirectly regulates GABAergic synaptic transmission. Negatively regulates NLRP3-driven inflammation. Catalyzes NLRP3 palmitoylation, leading to its degradation via the chaperone-mediated autophagy (CMA) process. The polypeptide is Palmitoyltransferase ZDHHC12 (Mus musculus (Mouse)).